Reading from the N-terminus, the 130-residue chain is Small ribosomal subunit protein uS11 (130 aa).

This sequence belongs to the universal ribosomal protein uS11 family. Part of the 30S ribosomal subunit. Interacts with proteins S7 and S18. Binds to IF-3.

Its function is as follows. Located on the platform of the 30S subunit, it bridges several disparate RNA helices of the 16S rRNA. Forms part of the Shine-Dalgarno cleft in the 70S ribosome. This is Small ribosomal subunit protein uS11 from Kosmotoga olearia (strain ATCC BAA-1733 / DSM 21960 / TBF 19.5.1).